Consider the following 409-residue polypeptide: Tryptophan synthase beta chain (409 aa).

N6-(pyridoxal phosphate)lysine is present on lysine 98.

Belongs to the TrpB family. Tetramer of two alpha and two beta chains. Pyridoxal 5'-phosphate is required as a cofactor.

It catalyses the reaction (1S,2R)-1-C-(indol-3-yl)glycerol 3-phosphate + L-serine = D-glyceraldehyde 3-phosphate + L-tryptophan + H2O. The protein operates within amino-acid biosynthesis; L-tryptophan biosynthesis; L-tryptophan from chorismate: step 5/5. In terms of biological role, the beta subunit is responsible for the synthesis of L-tryptophan from indole and L-serine. This Jannaschia sp. (strain CCS1) protein is Tryptophan synthase beta chain.